Consider the following 871-residue polypeptide: Alanine--tRNA ligase (871 aa).

Zn(2+) is bound by residues His-590, His-594, Cys-694, and His-698.

It belongs to the class-II aminoacyl-tRNA synthetase family. The cofactor is Zn(2+).

The protein localises to the cytoplasm. It carries out the reaction tRNA(Ala) + L-alanine + ATP = L-alanyl-tRNA(Ala) + AMP + diphosphate. Catalyzes the attachment of alanine to tRNA(Ala) in a two-step reaction: alanine is first activated by ATP to form Ala-AMP and then transferred to the acceptor end of tRNA(Ala). Also edits incorrectly charged Ser-tRNA(Ala) and Gly-tRNA(Ala) via its editing domain. The polypeptide is Alanine--tRNA ligase (Thermoplasma acidophilum (strain ATCC 25905 / DSM 1728 / JCM 9062 / NBRC 15155 / AMRC-C165)).